A 158-amino-acid polypeptide reads, in one-letter code: Endoribonuclease YbeY (158 aa).

H122, H126, and H132 together coordinate Zn(2+).

Belongs to the endoribonuclease YbeY family. The cofactor is Zn(2+).

It localises to the cytoplasm. Functionally, single strand-specific metallo-endoribonuclease involved in late-stage 70S ribosome quality control and in maturation of the 3' terminus of the 16S rRNA. This chain is Endoribonuclease YbeY, found in Bacillus licheniformis (strain ATCC 14580 / DSM 13 / JCM 2505 / CCUG 7422 / NBRC 12200 / NCIMB 9375 / NCTC 10341 / NRRL NRS-1264 / Gibson 46).